Reading from the N-terminus, the 451-residue chain is 2,4-dinitrotoluene dioxygenase system, large oxygenase component (451 aa).

The region spanning 42 to 126 is the Rieske domain; the sequence is WLFLTHDSLI…LQSVPFEKEL (85 aa). Residues Cys-84, His-86, Cys-104, and His-107 each coordinate [2Fe-2S] cluster. Fe cation is bound by residues His-211, His-216, and Asp-365.

Belongs to the bacterial ring-hydroxylating dioxygenase alpha subunit family. In terms of assembly, the 2,4-dinitrotoluene dioxygenase (DNTDO) multicomponent enzyme system is composed of an electron transfer component and a dioxygenase component (iron sulfur protein (ISP)). The electron transfer component is composed of a ferredoxin reductase (DntAa) and a ferredoxin (DntAb), and the dioxygenase component is formed of a large alpha subunit (DntAc) and a small beta subunit (DntAd). [2Fe-2S] cluster is required as a cofactor. The cofactor is Fe(2+).

The catalysed reaction is 2,4-dinitrotoluene + NADH + O2 = 4-methyl-5-nitrocatechol + nitrite + NAD(+). Functionally, component of the 2,4-dinitrotoluene dioxygenase (DNTDO) multicomponent enzyme system which catalyzes the incorporation of both atoms of molecular oxygen into 2,4-dinitrotoluene (DNT) to form 4-methyl-5-nitrocatechol (MNC) and nitrite. The alpha subunit has a catalytic role in the holoenzyme. Also able to convert naphthalene to cis-(1R,2S)-dihydroxy-1,2-dihydronaphthalene. This is 2,4-dinitrotoluene dioxygenase system, large oxygenase component from Burkholderia sp. (strain RASC).